Here is a 451-residue protein sequence, read N- to C-terminus: DNA polymerase delta subunit 3 (451 aa).

Disordered stretches follow at residues 187 to 241 (SQAK…AASS), 259 to 386 (KQTP…KVLR), and 404 to 451 (AWES…FAKK). The span at 200–216 (PSTSQVKEAPKASQTVE) shows a compositional bias: polar residues. Residues 225–241 (SAPAKKGSSAPKSAASS) show a composition bias toward low complexity. Residues 306 to 316 (QREEELRRMME) are compositionally biased toward basic and acidic residues. The span at 329-353 (EEEEEEEEEEESEHEQLPAEEEPMA) shows a compositional bias: acidic residues. Residues 354–366 (EEPKAPEPVKEEP) are compositionally biased toward basic and acidic residues. A compositionally biased stretch (basic residues) spans 376–386 (GRRRGKRKVLR). The PIP-box signature appears at 441 to 448 (QGSIMSWF).

In terms of assembly, component of the DNA polymerase delta complex which consists of PolD1, PolD2, PolD3 and PolD4, with PolD1 bearing DNA polymerase and 3' to 5' proofreading exonuclease activities. Directly interacts with PCNA.

It localises to the nucleus. Functionally, accessory component of the DNA polymerase delta complex. The complex is required for the maintenance of genome integrity, acting in concert with the sliding clamp processivity factor PCNA. The polypeptide is DNA polymerase delta subunit 3 (Chaetomium thermophilum (strain DSM 1495 / CBS 144.50 / IMI 039719) (Thermochaetoides thermophila)).